Here is a 232-residue protein sequence, read N- to C-terminus: MLKLTDITWLYHHLPMRFSLTVERGEQVAILGPSGAGKSTLLNLIAGFLTPASGSLTIDSVDHTTTPPSRRPVSMLFQENNLFSHLTVAQNIGLGLNPGLKLNAAQQEKMHAIARQMGIDNLMARLPGELSGGQRQRVALARCLVREQPILLLDEPFSALDPALRQEMLTLVSTSCQQQKMTLLMVSHSVEDAARIATRSVVVADGRIAWQGKTDELLSGKASASALLGITG.

The ABC transporter domain maps to 2–230 (LKLTDITWLY…KASASALLGI (229 aa)). 32-39 (GPSGAGKS) contacts ATP.

The protein belongs to the ABC transporter superfamily. Thiamine importer (TC 3.A.1.19.1) family. In terms of assembly, the complex is composed of two ATP-binding proteins (ThiQ), two transmembrane proteins (ThiP) and a solute-binding protein (ThiB).

It localises to the cell inner membrane. The enzyme catalyses thiamine(out) + ATP + H2O = thiamine(in) + ADP + phosphate + H(+). Its function is as follows. Part of the ABC transporter complex ThiBPQ involved in thiamine import. Responsible for energy coupling to the transport system. The sequence is that of Thiamine import ATP-binding protein ThiQ from Shigella sonnei (strain Ss046).